We begin with the raw amino-acid sequence, 351 residues long: MRKIIHVDMDCFFAAVEMRDNPALRDIPIAIGGSRERRGVISTANYPARQFGVRSAMPTAMALKLCPHLTLLPGRFDAYKEASRHVRDIFSRYTSLIEPLSLDEAWLDVTDSPHCYGSATLIAREIRQTIFNELQLTASAGVAPVKFLAKIASDLNKPNGQYVITPADVPDFLKTLPLAKIPGVGKVSAAKLENMGLRTCGDIQQCDLAMLLKRFGKFGRVLWERSQGIDERDVNSERLRKSVGVERTLAEDIHEWSDCEAIIEHLYPELERRLAIVKPDLLIARQGVKLKFNDFQQTTQEHVWPQLNKEDLITTARKTWDERRGERGVRLVGLHVTLLDPQLERQLVLGL.

The UmuC domain occupies 4–185 (IIHVDMDCFF…LPLAKIPGVG (182 aa)). Mg(2+) is bound by residues Asp-8 and Asp-103. The active site involves Glu-104.

Belongs to the DNA polymerase type-Y family. As to quaternary structure, monomer. Mg(2+) is required as a cofactor.

Its subcellular location is the cytoplasm. The enzyme catalyses DNA(n) + a 2'-deoxyribonucleoside 5'-triphosphate = DNA(n+1) + diphosphate. In terms of biological role, poorly processive, error-prone DNA polymerase involved in untargeted mutagenesis. Copies undamaged DNA at stalled replication forks, which arise in vivo from mismatched or misaligned primer ends. These misaligned primers can be extended by PolIV. Exhibits no 3'-5' exonuclease (proofreading) activity. May be involved in translesional synthesis, in conjunction with the beta clamp from PolIII. In Salmonella paratyphi B (strain ATCC BAA-1250 / SPB7), this protein is DNA polymerase IV.